A 919-amino-acid chain; its full sequence is Valine--tRNA ligase (919 aa).

The 'HIGH' region signature appears at proline 66 to histidine 76. A 'KMSKS' region motif is present at residues lysine 562 to serine 566. Lysine 565 lines the ATP pocket. Residues threonine 852–lysine 919 are a coiled coil.

Belongs to the class-I aminoacyl-tRNA synthetase family. ValS type 1 subfamily. As to quaternary structure, monomer.

It localises to the cytoplasm. It carries out the reaction tRNA(Val) + L-valine + ATP = L-valyl-tRNA(Val) + AMP + diphosphate. Its function is as follows. Catalyzes the attachment of valine to tRNA(Val). As ValRS can inadvertently accommodate and process structurally similar amino acids such as threonine, to avoid such errors, it has a 'posttransfer' editing activity that hydrolyzes mischarged Thr-tRNA(Val) in a tRNA-dependent manner. The protein is Valine--tRNA ligase of Corynebacterium diphtheriae (strain ATCC 700971 / NCTC 13129 / Biotype gravis).